Reading from the N-terminus, the 604-residue chain is Elongation factor 4 (604 aa).

The 183-residue stretch at 8-190 (KNKRNFSIIA…AIVHRIPAPN (183 aa)) folds into the tr-type G domain. GTP-binding positions include 20–25 (DHGKST) and 137–140 (NKID).

This sequence belongs to the TRAFAC class translation factor GTPase superfamily. Classic translation factor GTPase family. LepA subfamily.

The protein localises to the cell inner membrane. The catalysed reaction is GTP + H2O = GDP + phosphate + H(+). Functionally, required for accurate and efficient protein synthesis under certain stress conditions. May act as a fidelity factor of the translation reaction, by catalyzing a one-codon backward translocation of tRNAs on improperly translocated ribosomes. Back-translocation proceeds from a post-translocation (POST) complex to a pre-translocation (PRE) complex, thus giving elongation factor G a second chance to translocate the tRNAs correctly. Binds to ribosomes in a GTP-dependent manner. This chain is Elongation factor 4, found in Fusobacterium nucleatum subsp. nucleatum (strain ATCC 25586 / DSM 15643 / BCRC 10681 / CIP 101130 / JCM 8532 / KCTC 2640 / LMG 13131 / VPI 4355).